Here is a 149-residue protein sequence, read N- to C-terminus: Nucleoside diphosphate kinase (149 aa).

K9, F57, R85, T91, R102, and N112 together coordinate ATP. The active-site Pros-phosphohistidine intermediate is the H115.

It belongs to the NDK family. In terms of assembly, homotetramer. It depends on Mg(2+) as a cofactor.

It is found in the cytoplasm. The enzyme catalyses a 2'-deoxyribonucleoside 5'-diphosphate + ATP = a 2'-deoxyribonucleoside 5'-triphosphate + ADP. It catalyses the reaction a ribonucleoside 5'-diphosphate + ATP = a ribonucleoside 5'-triphosphate + ADP. Major role in the synthesis of nucleoside triphosphates other than ATP. The ATP gamma phosphate is transferred to the NDP beta phosphate via a ping-pong mechanism, using a phosphorylated active-site intermediate. This chain is Nucleoside diphosphate kinase, found in Nostoc sp. (strain PCC 7120 / SAG 25.82 / UTEX 2576).